A 92-amino-acid chain; its full sequence is RNA-binding protein Hfq (92 aa).

The region spanning Asp9–Phe68 is the Sm domain.

This sequence belongs to the Hfq family. In terms of assembly, homohexamer.

RNA chaperone that binds small regulatory RNA (sRNAs) and mRNAs to facilitate mRNA translational regulation in response to envelope stress, environmental stress and changes in metabolite concentrations. Also binds with high specificity to tRNAs. The polypeptide is RNA-binding protein Hfq (Shewanella piezotolerans (strain WP3 / JCM 13877)).